A 210-amino-acid chain; its full sequence is Prolactin-2 (210 aa).

A signal peptide spans 1-23; the sequence is MARRSQGTKLHLAVLCLVVSCHA. Cystine bridges form between Cys-69–Cys-183 and Cys-200–Cys-210.

Belongs to the somatotropin/prolactin family.

It localises to the secreted. In Oncorhynchus keta (Chum salmon), this protein is Prolactin-2 (prl2).